The chain runs to 2151 residues: RNA-directed RNA polymerase L (2151 aa).

Mn(2+) is bound by residues histidine 36, glutamate 54, aspartate 97, glutamate 110, and valine 111. The active-site For endonuclease activity is lysine 124. Positions 956–1142 (NGKFIRMKRK…SVNTEMWKSM (187 aa)) constitute a RdRp catalytic domain. Aspartate 1099 contributes to the Mg(2+) binding site.

It belongs to the Bunyavirales RNA polymerase family. In terms of assembly, interacts with the viral nucleoprotein. Requires Mn(2+) as cofactor. The cofactor is Mg(2+).

Its subcellular location is the host cytoplasm. The protein resides in the host perinuclear region. It catalyses the reaction RNA(n) + a ribonucleoside 5'-triphosphate = RNA(n+1) + diphosphate. Functionally, RNA-dependent RNA polymerase, which is responsible for the replication and transcription of the viral RNA genome using antigenomic RNA as an intermediate. During transcription, synthesizes subgenomic RNAs and assures their capping by a cap-snatching mechanism, which involves the endonuclease activity cleaving the host capped pre-mRNAs. These short capped RNAs are then used as primers for viral transcription. Cleaves ssRNA substrates but not DNA. Seems to downregulate the expression of its own and heterologous mRNAs through its endonuclease activity. The protein is RNA-directed RNA polymerase L of Apodemus agrarius (Eurasian field mouse).